We begin with the raw amino-acid sequence, 370 residues long: 2-Hydroxyacid oxidase 1 (370 aa).

One can recognise an FMN hydroxy acid dehydrogenase domain in the interval 1 to 365; sequence MLPRLICIND…DKTLVRKNPL (365 aa). A glyoxylate-binding site is contributed by Y26. FMN contacts are provided by residues 79–81, S108, and Q130; that span reads ATA. Y132 is a glyoxylate binding site. T158 provides a ligand contact to FMN. Residue R167 participates in glyoxylate binding. K184 carries the N6-succinyllysine modification. Residues S194 and S230 each carry the phosphoserine modification. FMN contacts are provided by K236 and S258. The glyoxylate site is built by H260 and R263. H260 serves as the catalytic Proton acceptor. FMN-binding positions include 291-295 and 314-315; these read DGGVR and GR. Residues 368 to 370 carry the Microbody targeting signal motif; it reads SKI.

Belongs to the FMN-dependent alpha-hydroxy acid dehydrogenase family. As to quaternary structure, homotetramer. Requires FMN as cofactor. Highly expressed in liver.

The protein localises to the peroxisome matrix. The catalysed reaction is a (2S)-2-hydroxycarboxylate + O2 = a 2-oxocarboxylate + H2O2. It carries out the reaction glycolate + O2 = glyoxylate + H2O2. The enzyme catalyses glyoxylate + O2 + H2O = oxalate + H2O2 + H(+). It catalyses the reaction 2-hydroxyhexadecanoate + O2 = 2-oxohexadecanoate + H2O2. The catalysed reaction is 2-hydroxyoctanoate + O2 = 2-oxooctanoate + H2O2. It functions in the pathway amino-acid biosynthesis; glycine biosynthesis. Its activity is regulated as follows. Inhibited by its product oxalate. Inhibited by high concentrations of dichlorophenolindophenol (DCIP) in vitro. Its function is as follows. Broad substrate specificity (S)-2-hydroxy-acid oxidase that preferentially oxidizes glycolate. The glyoxylate produced by the oxidation of glycolate can then be utilized by alanine-glyoxylate aminotransferase for the peroxisomal synthesis of glycine; this pathway appears to be an important step for the detoxification of glyoxylate which, if allowed to accumulate, may be metabolized to oxalate with formation of kidney stones. Can also catalyze the oxidation of glyoxylate, and long chain hydroxyacids such as 2-hydroxyhexadecanoate and 2-hydroxyoctanoate, albeit with much lower catalytic efficiency. Active in vitro with the artificial electron acceptor 2,6-dichlorophenolindophenol (DCIP), but O2 is believed to be the physiological electron acceptor, leading to the production of H2O2. Is not active on L-lactate and 2-hydroxybutanoate. The chain is 2-Hydroxyacid oxidase 1 from Homo sapiens (Human).